Consider the following 180-residue polypeptide: Epididymal-specific lipocalin-6 (180 aa).

The signal sequence occupies residues 1-20 (MGGLLLAALLALVAVPRAQA). A disulfide bridge connects residues cysteine 81 and cysteine 174.

This sequence belongs to the calycin superfamily. Lipocalin family.

Its subcellular location is the secreted. Its function is as follows. May play a role in male fertility. The sequence is that of Epididymal-specific lipocalin-6 (LCN6) from Macaca mulatta (Rhesus macaque).